A 433-amino-acid polypeptide reads, in one-letter code: GPI mannosyltransferase 2 (433 aa).

A topological domain (cytoplasmic) is located at residue M1. Residues 2–22 (IVGLTLYFVLFRSIQYLLVFL) form a helical membrane-spanning segment. Topologically, residues 23-109 (TPIRQFDTST…NNDSIYHALR (87 aa)) are lumenal. N-linked (GlcNAc...) asparagine glycans are attached at residues N69 and N101. Residues 110–130 (VGVAIENVLFYLSGIVLYFLT) form a helical membrane-spanning segment. At 131 to 161 (KKIFSQNIRQSQFARTIAKKTSLLFFLTSAA) the chain is on the cytoplasmic side. A helical transmembrane segment spans residues 162-182 (GFLTSIYSEPLSFFFAFVGIW). Topologically, residues 183-215 (SRECSISVPVLGQFDISWRYWFPYSFISMACFT) are lumenal. Residues 216-236 (LASLNRSNCVLLGIYFIFDLI) traverse the membrane as a helical segment. The Cytoplasmic portion of the chain corresponds to 237–243 (ELTKNRK). A helical membrane pass occupies residues 244–264 (FVKAICFPLLSGSLMFSALLY). The Lumenal portion of the chain corresponds to 265–318 (QQYYLPYKTFCPQRGEWCKSQLFSSIFITKTSLYSYIQSHYWGVGLLKYWTPNN). Residues 319 to 339 (IPNFLFAVPNIIILIYSSIYF) form a helical membrane-spanning segment. The Cytoplasmic portion of the chain corresponds to 340–350 (SKIYPSYNLKA). A helical membrane pass occupies residues 351 to 371 (LVWITRALVVIVCFFAHVQIL). Over 372–409 (NRIASFLPLHLWYLADRLVKTSDPKKMENPKGDDKIVK) the chain is Lumenal. Residues 410-430 (FYIYWLAFWIPLQTILFAAFL) form a helical membrane-spanning segment. The Cytoplasmic portion of the chain corresponds to 431–433 (PPA).

This sequence belongs to the PIGV family. As to quaternary structure, part of the GPI mannosyltransferase 2 complex composed of GPI18 and PGA1.

It is found in the endoplasmic reticulum membrane. The protein operates within glycolipid biosynthesis; glycosylphosphatidylinositol-anchor biosynthesis. Mannosyltransferase involved in glycosylphosphatidylinositol-anchor biosynthesis. Responsible for the transfer of the second mannose to the glycosylphosphatidylinositol during GPI precursor assembly. The sequence is that of GPI mannosyltransferase 2 (GPI18) from Saccharomyces cerevisiae (strain ATCC 204508 / S288c) (Baker's yeast).